Consider the following 495-residue polypeptide: Trimethylamine methyltransferase MttB (495 aa).

Position 334 (O334) is a non-standard amino acid, pyrrolysine.

It belongs to the trimethylamine methyltransferase family.

It carries out the reaction Co(I)-[trimethylamine-specific corrinoid protein] + trimethylamine + H(+) = methyl-Co(III)-[trimethylamine-specific corrinoid protein] + dimethylamine. It participates in one-carbon metabolism; methanogenesis from trimethylamine. Catalyzes the transfer of a methyl group from trimethylamine to the corrinoid cofactor of MttC. This Methanosarcina barkeri (strain Fusaro / DSM 804) protein is Trimethylamine methyltransferase MttB (mttB).